A 155-amino-acid polypeptide reads, in one-letter code: Large ribosomal subunit protein uL30 (155 aa).

The protein belongs to the universal ribosomal protein uL30 family. As to quaternary structure, part of the 50S ribosomal subunit.

The sequence is that of Large ribosomal subunit protein uL30 from Nitrosopumilus maritimus (strain SCM1).